The primary structure comprises 428 residues: Chaperone SurA (428 aa).

A signal peptide spans 1–20 (MKNWKTLLLGIAMIANTSFA). PpiC domains follow at residues 171–272 (STEL…KVND) and 282–382 (VTEV…ELLD).

Its subcellular location is the periplasm. The catalysed reaction is [protein]-peptidylproline (omega=180) = [protein]-peptidylproline (omega=0). In terms of biological role, chaperone involved in the correct folding and assembly of outer membrane proteins. Recognizes specific patterns of aromatic residues and the orientation of their side chains, which are found more frequently in integral outer membrane proteins. May act in both early periplasmic and late outer membrane-associated steps of protein maturation. This is Chaperone SurA from Shigella dysenteriae serotype 1 (strain Sd197).